The following is a 171-amino-acid chain: 3-hydroxydecanoyl-[acyl-carrier-protein] dehydratase (171 aa).

The active site involves His70.

Belongs to the thioester dehydratase family. FabA subfamily. In terms of assembly, homodimer.

It is found in the cytoplasm. It catalyses the reaction a (3R)-hydroxyacyl-[ACP] = a (2E)-enoyl-[ACP] + H2O. It carries out the reaction (3R)-hydroxydecanoyl-[ACP] = (2E)-decenoyl-[ACP] + H2O. The enzyme catalyses (2E)-decenoyl-[ACP] = (3Z)-decenoyl-[ACP]. It participates in lipid metabolism; fatty acid biosynthesis. Its function is as follows. Necessary for the introduction of cis unsaturation into fatty acids. Catalyzes the dehydration of (3R)-3-hydroxydecanoyl-ACP to E-(2)-decenoyl-ACP and then its isomerization to Z-(3)-decenoyl-ACP. Can catalyze the dehydratase reaction for beta-hydroxyacyl-ACPs with saturated chain lengths up to 16:0, being most active on intermediate chain length. The polypeptide is 3-hydroxydecanoyl-[acyl-carrier-protein] dehydratase (Xanthomonas oryzae pv. oryzae (strain MAFF 311018)).